A 748-amino-acid chain; its full sequence is MSDYNTGGPPPGPPPPAGGGGGAAGAGGGPPPGPPGAGDRGGGGPGGGGPGGGGASGGPSQPPGGGGPGIRKDAFADAVQRARQIAAKIGGDAATTVNNNTPDFGFGGQKRQLEDGDQPDSKKLASQGDSIGSQLGPIHPPPRTSMTEEYRVPDGMVGLIIGRGGEQINKIQQDSGCKVQISPDSGGLPERSVSLTGAPESVQKAKMMLDDIVSRGRGGPPGQFHDNANGGQNGTVQEIMIPAGKAGLVIGKGGETIKQLQERAGVKMILIQDGSQNTNVDKPLRIIGDPYKVQQACEMVMDILRERDQGGFGDRNEYGSRVGGGIDVPVPRHSVGVVIGRSGEMIKKIQNDAGVRIQFKQDDGTGPEKIAHIMGPPDRCEHAARIINDLLQSLRSGPPGPPGAPGMPPGGRGRGRGQGNWGPPGGEMTFSIPTHKCGLVIGRGGENVKAINQQTGAFVEISRQLPPNGDPNFKLFVIRGSPQQIDHAKQLIEEKIEGPLCPVGPGPGGPGPAGPMGPFNPGPFNQGPPGAPPHAGGPPPHQYPPQGWGNTYPQWQPPAPHDPNKAAAAATDPNAAWAAYYSHYYQQPPGPVPGPAPAPAAPPAQGEPPQPPPTGQSDYTKAWEEYYKKIGQQPQQPGAPPQQDYTKAWEEYYKKQAQVATGGGPGAPPGSQPDYSAAWAEYYRQQAAYYGQTPGPGGPQPPPTQQGQQQASGNCHPPPPPFSFQPPATVHPALVGSAGNPFPCGVCP.

Residues 1-78 (MSDYNTGGPP…GIRKDAFADA (78 aa)) are disordered. Position 2 is an N-acetylserine (S2). A compositionally biased stretch (pro residues) spans 8–17 (GPPPGPPPPA). Composition is skewed to gly residues over residues 18–28 (GGGGGAAGAGG) and 36–69 (GAGD…GGPG). R40 carries the omega-N-methylarginine modification. K88 carries the N6-acetyllysine modification. The interval 90 to 148 (GGDAATTVNNNTPDFGFGGQKRQLEDGDQPDSKKLASQGDSIGSQLGPIHPPPRTSMTE) is disordered. T101 carries the phosphothreonine modification. Positions 111–123 (RQLEDGDQPDSKK) are enriched in basic and acidic residues. Residue K122 forms a Glycyl lysine isopeptide (Lys-Gly) (interchain with G-Cter in SUMO1); alternate linkage. A Glycyl lysine isopeptide (Lys-Gly) (interchain with G-Cter in SUMO2); alternate cross-link involves residue K122. Phosphoserine occurs at positions 126, 130, 182, 185, 194, and 275. KH domains are found at residues 145 to 209 (SMTE…KMML), 234 to 300 (GTVQ…CEMV), and 323 to 387 (GGGI…ARII). Residues 394–422 (LRSGPPGPPGAPGMPPGGRGRGRGQGNWG) are disordered. Residues 398–408 (PPGPPGAPGMP) show a composition bias toward pro residues. The span at 409 to 422 (PGGRGRGRGQGNWG) shows a compositional bias: gly residues. An omega-N-methylarginine mark is found at R412, R414, R416, and R443. The region spanning 425–492 (GGEMTFSIPT…QQIDHAKQLI (68 aa)) is the KH 4 domain. S481 carries the phosphoserine modification. Residues 498 to 570 (GPLCPVGPGP…HDPNKAAAAA (73 aa)) are disordered. Composition is skewed to pro residues over residues 502–521 (PVGP…PFNP) and 529–543 (PGAP…PHQY). Repeat unit 1 spans residues 572 to 583 (DPNAAWAAYYSH). The tract at residues 572–685 (DPNAAWAAYY…SAAWAEYYRQ (114 aa)) is 4 X 12 AA imperfect repeats. The span at 588-614 (PPGPVPGPAPAPAAPPAQGEPPQPPPT) shows a compositional bias: pro residues. Disordered stretches follow at residues 588-650 (PPGP…KAWE), 659-678 (VATG…YSAA), and 689-735 (YYGQ…PALV). 3 repeat units span residues 618–629 (DYTKAWEEYYKK), 644–655 (DYTKAWEEYYKK), and 674–685 (DYSAAWAEYYRQ).

Belongs to the KHSRP family. In terms of assembly, part of a ternary complex containing FUBP2, PTBP1, PTBP2 and HNRPH1. Interacts with PARN. Interacts with PQBP1.

Its subcellular location is the nucleus. It is found in the cytoplasm. Binds to the dendritic targeting element and may play a role in mRNA trafficking. Part of a ternary complex that binds to the downstream control sequence (DCS) of the pre-mRNA. Mediates exon inclusion in transcripts that are subject to tissue-specific alternative splicing. May interact with single-stranded DNA from the far-upstream element (FUSE). May activate gene expression. Also involved in degradation of inherently unstable mRNAs that contain AU-rich elements (AREs) in their 3'-UTR, possibly by recruiting degradation machinery to ARE-containing mRNAs. The sequence is that of Far upstream element-binding protein 2 (Khsrp) from Mus musculus (Mouse).